Consider the following 151-residue polypeptide: Large ribosomal subunit protein uL13 (151 aa).

Belongs to the universal ribosomal protein uL13 family. In terms of assembly, part of the 50S ribosomal subunit.

In terms of biological role, this protein is one of the early assembly proteins of the 50S ribosomal subunit, although it is not seen to bind rRNA by itself. It is important during the early stages of 50S assembly. This chain is Large ribosomal subunit protein uL13, found in Synechocystis sp. (strain ATCC 27184 / PCC 6803 / Kazusa).